The following is a 912-amino-acid chain: Tubulin polyglutamylase TTLL7 (912 aa).

In terms of domain architecture, TTL spans 38-390 (KGIITANVAG…RTSDKRKNLA (353 aa)). ATP is bound by residues Lys-160, 166–167 (MG), 188–191 (QEYI), and 201–203 (KFD). Residue Arg-227 coordinates L-glutamate. 249–250 (TN) contributes to the ATP binding site. Tyr-251, Ser-252, and Lys-271 together coordinate L-glutamate. Mg(2+) is bound by residues Asp-336, Glu-349, and Asn-351. Lys-367 lines the L-glutamate pocket. The tract at residues 388–450 (NLAKQKAEAQ…VSQEEHENRH (63 aa)) is c-MTBD region. Disordered regions lie at residues 547 to 570 (YGSS…ENEK) and 658 to 688 (PTSA…STNT). Over residues 549–563 (SSDSSYDSSSSSSNS) the composition is skewed to low complexity. The segment covering 659–671 (TSASRSHSLNRAS) has biased composition (polar residues).

The protein belongs to the tubulin--tyrosine ligase family. In terms of assembly, interacts with both alpha- and beta-tubulin (via C-terminal tubulin tails). It depends on Mg(2+) as a cofactor. As to expression, highly expressed in brain, testis and trachea. Expressed in brain, heart, kidney, liver, lung, muscle and trachea. In the brain, highly expressed in hippocampus, thalamus, olfactory bulb and cerebellum cortex, corpus callosum and striatum.

The protein localises to the cell projection. It localises to the cilium. It is found in the cytoplasm. Its subcellular location is the cytoskeleton. The protein resides in the cilium basal body. The protein localises to the dendrite. It localises to the perikaryon. It catalyses the reaction L-glutamyl-[protein] + L-glutamate + ATP = gamma-L-glutamyl-L-glutamyl-[protein] + ADP + phosphate + H(+). It carries out the reaction (L-glutamyl)(n)-gamma-L-glutamyl-L-glutamyl-[protein] + L-glutamate + ATP = (L-glutamyl)(n+1)-gamma-L-glutamyl-L-glutamyl-[protein] + ADP + phosphate + H(+). Its function is as follows. Polyglutamylase which modifies tubulin, generating polyglutamate side chains of variable lengths on the gamma-carboxyl group of specific glutamate residues within the C-terminal tail of tubulin. Mediates both ATP-dependent initiation and elongation steps of the polyglutamylation reaction. Preferentially modifies the beta-tubulin tail over an alpha-tail. Competes with monoglycylase TTLL3 for modification site on beta-tubulin substrate, thereby creating an anticorrelation between glycylation and glutamylation reactions. Required for neurite growth; responsible for the strong increase in tubulin polyglutamylation during postnatal neuronal maturation. This is Tubulin polyglutamylase TTLL7 from Mus musculus (Mouse).